The sequence spans 582 residues: Formate--tetrahydrofolate ligase (582 aa).

65-72 contributes to the ATP binding site; the sequence is TPLGEGKT.

Belongs to the formate--tetrahydrofolate ligase family.

The enzyme catalyses (6S)-5,6,7,8-tetrahydrofolate + formate + ATP = (6R)-10-formyltetrahydrofolate + ADP + phosphate. The protein operates within one-carbon metabolism; tetrahydrofolate interconversion. The sequence is that of Formate--tetrahydrofolate ligase from Vibrio cholerae serotype O1 (strain ATCC 39315 / El Tor Inaba N16961).